We begin with the raw amino-acid sequence, 459 residues long: Exodeoxyribonuclease 7 large subunit (459 aa).

It belongs to the XseA family. Heterooligomer composed of large and small subunits.

It localises to the cytoplasm. It catalyses the reaction Exonucleolytic cleavage in either 5'- to 3'- or 3'- to 5'-direction to yield nucleoside 5'-phosphates.. In terms of biological role, bidirectionally degrades single-stranded DNA into large acid-insoluble oligonucleotides, which are then degraded further into small acid-soluble oligonucleotides. The protein is Exodeoxyribonuclease 7 large subunit of Pseudomonas aeruginosa (strain LESB58).